Consider the following 287-residue polypeptide: Glutamate racemase (287 aa).

Positions 1–15 are enriched in polar residues; the sequence is MATKPQDANTTSREA. Residues 1 to 25 form a disordered region; sequence MATKPQDANTTSREAITSKADSPPR. Substrate is bound by residues 32 to 33 and 64 to 65; these read DS and YG. Catalysis depends on Cys-96, which acts as the Proton donor/acceptor. 97 to 98 contributes to the substrate binding site; the sequence is NT. The active-site Proton donor/acceptor is the Cys-208. 209–210 serves as a coordination point for substrate; it reads TH.

This sequence belongs to the aspartate/glutamate racemases family.

The catalysed reaction is L-glutamate = D-glutamate. It functions in the pathway cell wall biogenesis; peptidoglycan biosynthesis. In terms of biological role, provides the (R)-glutamate required for cell wall biosynthesis. This is Glutamate racemase from Yersinia pseudotuberculosis serotype O:3 (strain YPIII).